A 947-amino-acid chain; its full sequence is Receptor-like protein 56 (947 aa).

A signal peptide spans 1–27; that stretch reads MEGKVFSGQKLILVMLLLGHLHGFSSC. At 28–899 the chain is on the extracellular side; that stretch reads IEKERKALLE…EDDKEVAIDM (872 aa). 3 N-linked (GlcNAc...) asparagine glycosylation sites follow: N60, N75, and N98. LRR repeat units lie at residues 105 to 128, 134 to 157, 159 to 182, 183 to 207, 209 to 232, 233 to 257, 259 to 281, 282 to 305, and 307 to 330; these read FEEV…VEGY, LRNL…FLNA, TSLT…ELKN, LTNL…EFPY, KKLK…GLKN, LTNL…VFCE, KNLQ…CFGN, LNKL…SFSS, and ESLE…PLTN. 3 N-linked (GlcNAc...) asparagine glycosylation sites follow: N141, N148, and N182. N-linked (GlcNAc...) asparagine glycosylation is present at N232. N330 carries N-linked (GlcNAc...) asparagine glycosylation. Residues 332–356 form an LRR 10; degenerate repeat; it reads TKLKVFIFSSKDDMVQVKIESTWQP. 18 LRR repeats span residues 357-380, 381-404, 405-427, 428-450, 452-476, 477-500, 502-527, 529-549, 550-575, 577-598, 600-616, 617-640, 642-663, 664-686, 757-780, 781-804, 805-829, and 831-854; these read LFQL…LMYQ, KNLH…LLEN, NPEL…PTSV, HNLQ…NFGR, LPNL…MGEM, YNIS…FVSS, FSLS…NFTS, IVLR…LLTL, VDLC…VFEY, NFLD…SLDN, LFLH…DTFL, GSIQ…VDTQ, ISFL…LCEF, SKMR…CFNN, LNSM…ELGD, LFKL…SFSK, LQDI…LTNL, and SLAI…QFNT. Residue N415 is glycosylated (N-linked (GlcNAc...) asparagine). Residues N459, N478, N488, and N524 are each glycosylated (N-linked (GlcNAc...) asparagine). A glycan (N-linked (GlcNAc...) asparagine) is linked at N606. An N-linked (GlcNAc...) asparagine glycan is attached at N686. Residues N788, N828, N836, and N841 are each glycosylated (N-linked (GlcNAc...) asparagine). Residues 900–920 form a helical membrane-spanning segment; the sequence is LVFYWSTAGTYVTALIGILVL. At 921–947 the chain is on the cytoplasmic side; it reads MCVDCSWRRAWLRLVDAFIASAKSKLA.

It belongs to the RLP family.

The protein localises to the cell membrane. The sequence is that of Receptor-like protein 56 from Arabidopsis thaliana (Mouse-ear cress).